A 60-amino-acid polypeptide reads, in one-letter code: UPF0337 protein SAV1625 (60 aa).

Positions 18-41 (VGNVTDNKELEKEGQQDKATGKAK) are disordered. The span at 23–41 (DNKELEKEGQQDKATGKAK) shows a compositional bias: basic and acidic residues.

It belongs to the UPF0337 (CsbD) family.

This is UPF0337 protein SAV1625 from Staphylococcus aureus (strain Mu50 / ATCC 700699).